Here is a 479-residue protein sequence, read N- to C-terminus: Adenosylhomocysteinase (479 aa).

Thr56, Asp134, and Glu200 together coordinate substrate. Residue Thr201–Thr203 participates in NAD(+) binding. Residues Lys230 and Asp234 each coordinate substrate. NAD(+) is bound by residues Asn235, Gly264–Gly269, Glu287, Asn322, Ile343–His345, and Asn391.

Belongs to the adenosylhomocysteinase family. Homotetramer. NAD(+) serves as cofactor.

The enzyme catalyses S-adenosyl-L-homocysteine + H2O = L-homocysteine + adenosine. The protein operates within amino-acid biosynthesis; L-homocysteine biosynthesis; L-homocysteine from S-adenosyl-L-homocysteine: step 1/1. In terms of biological role, adenosylhomocysteine is a competitive inhibitor of S-adenosyl-L-methionine-dependent methyl transferase reactions; therefore adenosylhomocysteinase may play a key role in the control of methylations via regulation of the intracellular concentration of adenosylhomocysteine. This chain is Adenosylhomocysteinase, found in Plasmodium falciparum (isolate 3D7).